Reading from the N-terminus, the 391-residue chain is F-box protein At2g34280 (391 aa).

The 43-residue stretch at 1 to 43 (MDLLPYDVVEHILERLDVKSLLNCKSVSKQWRSTIRCRAFQER) folds into the F-box domain.

In Arabidopsis thaliana (Mouse-ear cress), this protein is F-box protein At2g34280.